Consider the following 537-residue polypeptide: Arginine--tRNA ligase (537 aa).

The short motif at 113–123 is the 'HIGH' region element; sequence ANPTGELHLGH.

Belongs to the class-I aminoacyl-tRNA synthetase family. Monomer.

It is found in the cytoplasm. The enzyme catalyses tRNA(Arg) + L-arginine + ATP = L-arginyl-tRNA(Arg) + AMP + diphosphate. This Mycoplasma pneumoniae (strain ATCC 29342 / M129 / Subtype 1) (Mycoplasmoides pneumoniae) protein is Arginine--tRNA ligase (argS).